Here is a 642-residue protein sequence, read N- to C-terminus: G protein-coupled receptor kinase 1 (642 aa).

Residues 1–202 form an N-terminal region; sequence MEIENIVANT…LEKRPVDKHT (202 aa). Residues 52–188 form the RGS domain; that stretch reads YAFVVEKQPI…AESMYFHRFL (137 aa). In terms of domain architecture, Protein kinase spans 203-470; that stretch reads FRLYRVLGKG…AEEIRAHPFF (268 aa). ATP-binding positions include 209-217 and K232; that span reads LGKGGFGEV. The active-site Proton acceptor is D328. The region spanning 480–545 is the AGC-kinase C-terminal domain; that stretch reads EPVPWKKMEA…GCVSIPWQSE (66 aa). The disordered stretch occupies residues 612-642; the sequence is VEQQQPPKTSTQTPAVRSSRAASASGRTLVI. Over residues 614–636 the composition is skewed to low complexity; that stretch reads QQQPPKTSTQTPAVRSSRAASAS.

Belongs to the protein kinase superfamily. AGC Ser/Thr protein kinase family. GPRK subfamily.

It carries out the reaction [G-protein-coupled receptor] + ATP = [G-protein-coupled receptor]-phosphate + ADP + H(+). Functionally, specifically phosphorylates the activated forms of G protein-coupled receptors. This is G protein-coupled receptor kinase 1 (grk-1) from Caenorhabditis elegans.